Here is a 338-residue protein sequence, read N- to C-terminus: MNLSRIGLDLAKQVFQVHGVDRHEHVVCRRQLKRAQVRDFFRQLPPCLVAMEACGSAHYWARELRELGHTVRLIAPQFVKPYVKGDKHDAHDAEAICEAASRPSMRYVPVKSAEQQAVQSMHRVRSRLVRARTALCNEVRGLLGEFGLIATRRGRAATMALLETVMATEPAPLPAPMGELLRELKDELQTLEARIARLERQIQAHVRGDARIQRLLAVEGIGPISASAVAASAGDARQFRTGRQFAAWLGLVPRQHSTGGQQRLGNISKRGDTYLRTLLIHGARAVVRCCANKTDARSRWLQGLLQRRPANVVAVALANKNARILWALLSRETCYRPG.

This sequence belongs to the transposase 20 family.

In terms of biological role, required for the transposition of an insertion element. This Pseudomonas aeruginosa (strain ATCC 15692 / DSM 22644 / CIP 104116 / JCM 14847 / LMG 12228 / 1C / PRS 101 / PAO1) protein is Probable family 20 transposase.